A 273-amino-acid chain; its full sequence is 4-hydroxy-tetrahydrodipicolinate reductase (273 aa).

Residues 12-17 and glutamate 38 each bind NAD(+); that span reads GAGGRM. Position 39 (arginine 39) interacts with NADP(+). NAD(+) is bound by residues 102–104 and 126–129; these read GTT and AANF. Histidine 159 functions as the Proton donor/acceptor in the catalytic mechanism. Histidine 160 is a binding site for (S)-2,3,4,5-tetrahydrodipicolinate. Lysine 163 (proton donor) is an active-site residue. A (S)-2,3,4,5-tetrahydrodipicolinate-binding site is contributed by 169–170; that stretch reads GT.

Belongs to the DapB family. Homotetramer.

Its subcellular location is the cytoplasm. It carries out the reaction (S)-2,3,4,5-tetrahydrodipicolinate + NAD(+) + H2O = (2S,4S)-4-hydroxy-2,3,4,5-tetrahydrodipicolinate + NADH + H(+). The catalysed reaction is (S)-2,3,4,5-tetrahydrodipicolinate + NADP(+) + H2O = (2S,4S)-4-hydroxy-2,3,4,5-tetrahydrodipicolinate + NADPH + H(+). Its pathway is amino-acid biosynthesis; L-lysine biosynthesis via DAP pathway; (S)-tetrahydrodipicolinate from L-aspartate: step 4/4. Catalyzes the conversion of 4-hydroxy-tetrahydrodipicolinate (HTPA) to tetrahydrodipicolinate. The protein is 4-hydroxy-tetrahydrodipicolinate reductase of Salmonella arizonae (strain ATCC BAA-731 / CDC346-86 / RSK2980).